A 1182-amino-acid chain; its full sequence is Myosin IC heavy chain (1182 aa).

The Myosin motor domain occupies 15-698 (EGLDDMTLLS…MLFSLEETRE (684 aa)). Residue 109–116 (GESGAGKT) coordinates ATP. The actin-binding stretch occupies residues 571 to 593 (AAELVATLMKSTPHYIRTIKPND). The TH1 domain maps to 774 to 957 (RNRFSMISVR…QFHIASGLPA (184 aa)). 2 disordered regions span residues 999 to 1052 (KPAP…PAPG) and 1064 to 1103 (SKPL…PAGQ). Low complexity predominate over residues 1013-1042 (KKPAPTAPGGAPMMKKPAPAPGGAPMMKKP). Over residues 1081–1092 (PTAPGGPAPAGA) the composition is skewed to pro residues. In terms of domain architecture, SH3 spans 1123–1182 (PPPQQYIALYEYDAMQPDELTFKENDVINLIKKVDADWWQGELVRTKQIGMLPSNYVQQI).

It belongs to the TRAFAC class myosin-kinesin ATPase superfamily. Myosin family. As to quaternary structure, myosin I heavy chain is single-headed. Dimer of a heavy and a light chain. Inability to self-assemble into filaments.

The protein resides in the cell projection. Its subcellular location is the lamellipodium. Functionally, myosin is a protein that binds to actin and has ATPase activity that is activated by actin. Involved in the process of phagocytosis and appears to support streaming behavior. In Dictyostelium discoideum (Social amoeba), this protein is Myosin IC heavy chain (myoC).